The chain runs to 220 residues: PKHD-type hydroxylase PCC7424_1929 (220 aa).

The Fe2OG dioxygenase domain maps to 77 to 173; sequence KIHSLLFSRY…RLVAVGWVQS (97 aa). Residues His95, Asp97, and His154 each coordinate Fe cation. Arg164 serves as a coordination point for 2-oxoglutarate.

It depends on Fe(2+) as a cofactor. L-ascorbate serves as cofactor.

The polypeptide is PKHD-type hydroxylase PCC7424_1929 (Gloeothece citriformis (strain PCC 7424) (Cyanothece sp. (strain PCC 7424))).